The primary structure comprises 343 residues: Uroporphyrinogen decarboxylase (343 aa).

Substrate contacts are provided by residues 24 to 28, Phe43, Asp74, Tyr151, Ser206, and His321; that span reads RQAGR.

Belongs to the uroporphyrinogen decarboxylase family. As to quaternary structure, homodimer.

Its subcellular location is the cytoplasm. The enzyme catalyses uroporphyrinogen III + 4 H(+) = coproporphyrinogen III + 4 CO2. It functions in the pathway porphyrin-containing compound metabolism; protoporphyrin-IX biosynthesis; coproporphyrinogen-III from 5-aminolevulinate: step 4/4. Its function is as follows. Catalyzes the decarboxylation of four acetate groups of uroporphyrinogen-III to yield coproporphyrinogen-III. In Thermosynechococcus vestitus (strain NIES-2133 / IAM M-273 / BP-1), this protein is Uroporphyrinogen decarboxylase.